Reading from the N-terminus, the 318-residue chain is ADP-ribosyl cyclase/cyclic ADP-ribose hydrolase 2 (318 aa).

A signal peptide spans 1–32 (MAAQGCAASRLLQLLLQLLLLLLLLAAGGARA). Cystine bridges form between Cys51–Cys67, Cys83–Cys163, and Cys144–Cys157. N-linked (GlcNAc...) asparagine glycans are attached at residues Asn66 and Asn95. Trp109 serves as a coordination point for NAD(+). Position 109 (Trp109) interacts with nicotinamide. Residue Asn148 is glycosylated (N-linked (GlcNAc...) asparagine). Position 172 (Trp172) interacts with NAD(+). Residue Asn192 is glycosylated (N-linked (GlcNAc...) asparagine). Glu210 is an NAD(+) binding site. 2 cysteine pairs are disulfide-bonded: Cys238–Cys259 and Cys271–Cys280. Ala293 is lipidated: GPI-anchor amidated alanine. Positions 294 to 318 (PSLYTEQRAGLIIPLFLVLASRTQL) are cleaved as a propeptide — removed in mature form.

Belongs to the ADP-ribosyl cyclase family. In terms of assembly, homodimer. Expressed in various tissues including placenta, lung, liver and kidney.

It is found in the cell membrane. It catalyses the reaction NAD(+) + H2O = ADP-D-ribose + nicotinamide + H(+). It carries out the reaction NAD(+) = cyclic ADP-beta-D-ribose + nicotinamide + H(+). The catalysed reaction is cyclic ADP-beta-D-ribose + H2O = ADP-D-ribose. ADP-ribosyl cyclase and cADPR hydrolase activities are both activated by Zn(2+) or Mn(2+), and inhibited by Cu(2+), while Mg(2+) and Ca(2+) do not have any significant influence. Functionally, catalyzes both the synthesis of cyclic ADP-beta-D-ribose (cADPR) from NAD(+), and its hydrolysis to ADP-D-ribose (ADPR). Cyclic ADPR is known to serve as an endogenous second messenger that elicits calcium release from intracellular stores, and thus regulates the mobilization of intracellular calcium. May be involved in pre-B-cell growth. This is ADP-ribosyl cyclase/cyclic ADP-ribose hydrolase 2 (BST1) from Homo sapiens (Human).